A 255-amino-acid polypeptide reads, in one-letter code: Small ribosomal subunit protein uS2 (255 aa).

Belongs to the universal ribosomal protein uS2 family.

This is Small ribosomal subunit protein uS2 from Streptococcus pyogenes serotype M28 (strain MGAS6180).